Consider the following 437-residue polypeptide: MKQHLWPLFLEAVKRDVVPALGCTEPISVALAAAIAIDELGIKNQASNVKLDVKIDVAVSANLMKNGMGVGIPGTGMVGLPIAAAIGAIAGDRHAGLEVLKSIKDSDVQAAKLMLANELVTVGVADVANILYAKVTVYYQQQTASVTIADSHTKVIAIEKNGEQCLLESQAKTTNDNSCKANPFTEAKLQDIYDFAMQAPLDDIRFIMQAKTLNDALSIEGLSGNYGLKIGATLVKNQAKGLLSGGLLTEVLARTAGASDARMDGAMMPAMSNSGSGNQGIAATMPVVACAEFLKSSETQTIRALMLSHLTAIYIKSYQNKLSALCGATTASMGAAAGITYLLDGELEQISAAICSMIGDVSGIICDGAKASCAMKVSSSAGSAVKSALMAIDGIRVTGTEGIVADDVDQTICNLATLANGAMTQTDVQILEIMLHK.

Belongs to the UPF0597 family.

The sequence is that of UPF0597 protein Shal_0864 from Shewanella halifaxensis (strain HAW-EB4).